An 84-amino-acid chain; its full sequence is Putative membrane protein insertion efficiency factor (84 aa).

Residues 60-84 (WSQPGEDPVPDHFSLKRNDTRKQSH) are disordered. Positions 68–84 (VPDHFSLKRNDTRKQSH) are enriched in basic and acidic residues.

This sequence belongs to the UPF0161 family.

The protein localises to the cell membrane. Could be involved in insertion of integral membrane proteins into the membrane. This is Putative membrane protein insertion efficiency factor from Streptococcus gordonii (strain Challis / ATCC 35105 / BCRC 15272 / CH1 / DL1 / V288).